The following is a 95-amino-acid chain: Aspartyl/glutamyl-tRNA(Asn/Gln) amidotransferase subunit C (95 aa).

This sequence belongs to the GatC family. In terms of assembly, heterotrimer of A, B and C subunits.

It carries out the reaction L-glutamyl-tRNA(Gln) + L-glutamine + ATP + H2O = L-glutaminyl-tRNA(Gln) + L-glutamate + ADP + phosphate + H(+). The catalysed reaction is L-aspartyl-tRNA(Asn) + L-glutamine + ATP + H2O = L-asparaginyl-tRNA(Asn) + L-glutamate + ADP + phosphate + 2 H(+). Allows the formation of correctly charged Asn-tRNA(Asn) or Gln-tRNA(Gln) through the transamidation of misacylated Asp-tRNA(Asn) or Glu-tRNA(Gln) in organisms which lack either or both of asparaginyl-tRNA or glutaminyl-tRNA synthetases. The reaction takes place in the presence of glutamine and ATP through an activated phospho-Asp-tRNA(Asn) or phospho-Glu-tRNA(Gln). This chain is Aspartyl/glutamyl-tRNA(Asn/Gln) amidotransferase subunit C, found in Campylobacter concisus (strain 13826).